Consider the following 147-residue polypeptide: UPF0306 protein YhbP (147 aa).

This sequence belongs to the UPF0306 family.

In Escherichia coli O17:K52:H18 (strain UMN026 / ExPEC), this protein is UPF0306 protein YhbP.